Consider the following 343-residue polypeptide: Biotin synthase (343 aa).

Residues 36 to 254 (NTIQISTLLS…IAVARIMMPK (219 aa)) form the Radical SAM core domain. 3 residues coordinate [4Fe-4S] cluster: Cys51, Cys55, and Cys58. Positions 95, 126, 186, and 258 each coordinate [2Fe-2S] cluster.

The protein belongs to the radical SAM superfamily. Biotin synthase family. In terms of assembly, homodimer. The cofactor is [4Fe-4S] cluster. [2Fe-2S] cluster is required as a cofactor.

It catalyses the reaction (4R,5S)-dethiobiotin + (sulfur carrier)-SH + 2 reduced [2Fe-2S]-[ferredoxin] + 2 S-adenosyl-L-methionine = (sulfur carrier)-H + biotin + 2 5'-deoxyadenosine + 2 L-methionine + 2 oxidized [2Fe-2S]-[ferredoxin]. It participates in cofactor biosynthesis; biotin biosynthesis; biotin from 7,8-diaminononanoate: step 2/2. Its function is as follows. Catalyzes the conversion of dethiobiotin (DTB) to biotin by the insertion of a sulfur atom into dethiobiotin via a radical-based mechanism. The sequence is that of Biotin synthase from Buchnera aphidicola subsp. Acyrthosiphon pisum (strain APS) (Acyrthosiphon pisum symbiotic bacterium).